The following is a 344-amino-acid chain: GTPase Obg (344 aa).

Over residues 1–12 (MFVDSASFSVSS) the composition is skewed to polar residues. Residues 1–36 (MFVDSASFSVSSGKGGPGCASFRREKHVPLGGPDGG) are disordered. In terms of domain architecture, Obg spans 1 to 158 (MFVDSASFSV…RNIRLELKLI (158 aa)). The OBG-type G domain occupies 159–341 (ADVGLVGFPN…LKFGLLEILK (183 aa)). GTP-binding positions include 165–172 (GFPNVGKS), 190–194 (FTTLT), 212–215 (DIPG), 280–283 (TRLD), and 322–324 (SSV). Mg(2+)-binding residues include serine 172 and threonine 192.

The protein belongs to the TRAFAC class OBG-HflX-like GTPase superfamily. OBG GTPase family. Monomer. The cofactor is Mg(2+).

It is found in the cytoplasm. Functionally, an essential GTPase which binds GTP, GDP and possibly (p)ppGpp with moderate affinity, with high nucleotide exchange rates and a fairly low GTP hydrolysis rate. Plays a role in control of the cell cycle, stress response, ribosome biogenesis and in those bacteria that undergo differentiation, in morphogenesis control. The polypeptide is GTPase Obg (Campylobacter fetus subsp. fetus (strain 82-40)).